The following is a 251-amino-acid chain: WUSCHEL-related homeobox 4 (251 aa).

2 disordered regions span residues M1 to S21 and L33 to P93. A compositionally biased stretch (low complexity) spans S11–S21. Residues K71–E83 are compositionally biased toward basic and acidic residues. The segment at residues P86–Q150 is a DNA-binding region (homeobox; WUS-type).

The protein belongs to the WUS homeobox family. In terms of tissue distribution, expressed in the vasculature of the whole plant (roots, hypocotyls, cotyledons and leaves), trichomes and stomata. Expresse in the developing vascular bundles of root and shoot lateral organs.

It is found in the nucleus. In terms of biological role, promotes differentiation and/or maintenance of the vascular procambium, the initial cells of the developing vasculature. Part of the TDIF-TDR-WOX4 signaling pathway that plays a crucial role in the maintenance of the vascular meristem organization during secondary growth. Is required for promoting the proliferation of procambial/cambial stem cells but not for repressing their commitment to xylem differentiation in response to the TDIF signal. Acts redundantly with WOX14 downstream of the TDR/PXY receptor kinase to regulate procambial cell proliferation and differentiation in vascular tissue, independently of any role in vascular. Acts as a cambium regulator in the inflorescence stem. Is required for auxin-dependent cambium stimulation in the inflorescence stem. In Arabidopsis thaliana (Mouse-ear cress), this protein is WUSCHEL-related homeobox 4 (WOX4).